Reading from the N-terminus, the 493-residue chain is Succinate-semialdehyde dehydrogenase [NADP(+)] 2 (493 aa).

Gly-242–Gly-247 contributes to the NAD(+) binding site. Residue Glu-264 is part of the active site. Cys-298 functions as the Nucleophile in the catalytic mechanism.

Belongs to the aldehyde dehydrogenase family. Homotetramer.

Its subcellular location is the cytoplasm. The enzyme catalyses succinate semialdehyde + NAD(+) + H2O = succinate + NADH + 2 H(+). The catalysed reaction is succinate semialdehyde + NADP(+) + H2O = succinate + NADPH + 2 H(+). It functions in the pathway amino-acid degradation; 4-aminobutanoate degradation. Functionally, catalyzes the oxidation of succinate semialdehyde to succinate. Can utilize both NAD(+) or NADP(+) as a coenzyme. Functions in the GABA shunt, which allows to bypass 2 reactions in the TCA cycle by removing alpha-ketoglutarate from the cycle and feeding succinate and NADH back into the cycle. This Schizosaccharomyces pombe (strain 972 / ATCC 24843) (Fission yeast) protein is Succinate-semialdehyde dehydrogenase [NADP(+)] 2 (ssd2).